The sequence spans 255 residues: Aliphatic sulfonates import ATP-binding protein SsuB (255 aa).

The ABC transporter domain maps to 5–231 (IRVNEKAFGK…PRSRTSPVFQ (227 aa)). 39 to 46 (GPSGCGKS) is a binding site for ATP.

The protein belongs to the ABC transporter superfamily. Aliphatic sulfonates importer (TC 3.A.1.17.2) family. The complex is composed of two ATP-binding proteins (SsuB), two transmembrane proteins (SsuC) and a solute-binding protein (SsuA).

It localises to the cell membrane. It carries out the reaction ATP + H2O + aliphatic sulfonate-[sulfonate-binding protein]Side 1 = ADP + phosphate + aliphatic sulfonateSide 2 + [sulfonate-binding protein]Side 1.. Part of the ABC transporter complex SsuABC involved in aliphatic sulfonates import. Responsible for energy coupling to the transport system. The polypeptide is Aliphatic sulfonates import ATP-binding protein SsuB (Bacillus licheniformis (strain ATCC 14580 / DSM 13 / JCM 2505 / CCUG 7422 / NBRC 12200 / NCIMB 9375 / NCTC 10341 / NRRL NRS-1264 / Gibson 46)).